Reading from the N-terminus, the 136-residue chain is Large ribosomal subunit protein uL16 (136 aa).

The protein belongs to the universal ribosomal protein uL16 family. As to quaternary structure, part of the 50S ribosomal subunit.

Functionally, binds 23S rRNA and is also seen to make contacts with the A and possibly P site tRNAs. The polypeptide is Large ribosomal subunit protein uL16 (Sodalis glossinidius (strain morsitans)).